We begin with the raw amino-acid sequence, 51 residues long: Large ribosomal subunit protein eL39 (51 aa).

Belongs to the eukaryotic ribosomal protein eL39 family.

The polypeptide is Large ribosomal subunit protein eL39 (rpl39e) (Pyrococcus horikoshii (strain ATCC 700860 / DSM 12428 / JCM 9974 / NBRC 100139 / OT-3)).